Consider the following 540-residue polypeptide: Chaperonin GroEL (540 aa).

Residues 29-32, 86-90, glycine 413, 476-478, and aspartate 492 contribute to the ATP site; these read TIGP, DGTTT, and NAA.

The protein belongs to the chaperonin (HSP60) family. In terms of assembly, forms a cylinder of 14 subunits composed of two heptameric rings stacked back-to-back. Interacts with the co-chaperonin GroES.

The protein localises to the cytoplasm. It catalyses the reaction ATP + H2O + a folded polypeptide = ADP + phosphate + an unfolded polypeptide.. Its function is as follows. Together with its co-chaperonin GroES, plays an essential role in assisting protein folding. The GroEL-GroES system forms a nano-cage that allows encapsulation of the non-native substrate proteins and provides a physical environment optimized to promote and accelerate protein folding. The sequence is that of Chaperonin GroEL from Staphylococcus carnosus (strain TM300).